A 128-amino-acid polypeptide reads, in one-letter code: Large-conductance mechanosensitive channel (128 aa).

The next 2 membrane-spanning stretches (helical) occupy residues 10 to 30 (FAMR…GAFG) and 76 to 96 (GLFI…FMMV).

Belongs to the MscL family. In terms of assembly, homopentamer.

The protein resides in the cell inner membrane. Channel that opens in response to stretch forces in the membrane lipid bilayer. May participate in the regulation of osmotic pressure changes within the cell. This Mannheimia succiniciproducens (strain KCTC 0769BP / MBEL55E) protein is Large-conductance mechanosensitive channel.